We begin with the raw amino-acid sequence, 218 residues long: Small ribosomal subunit protein uS5 (218 aa).

Residues 1–49 (MPGRQRRDGGSGPAGQNGPNTGDNRGGGDRRGGGRDDRRGGQSAEKSNH) form a disordered region. Residues 26-49 (GGGDRRGGGRDDRRGGQSAEKSNH) show a composition bias toward basic and acidic residues. The S5 DRBM domain occupies 49–112 (HIERVVTINR…EEARKSFFRV (64 aa)).

The protein belongs to the universal ribosomal protein uS5 family. Part of the 30S ribosomal subunit. Contacts proteins S4 and S8.

With S4 and S12 plays an important role in translational accuracy. Its function is as follows. Located at the back of the 30S subunit body where it stabilizes the conformation of the head with respect to the body. The protein is Small ribosomal subunit protein uS5 of Rhodococcus jostii (strain RHA1).